A 453-amino-acid chain; its full sequence is Transcription factor bHLH110 (453 aa).

Disordered stretches follow at residues 1-37 and 177-197; these read MDSA…YGAS and SSLP…RGNF. 2 stretches are compositionally biased toward low complexity: residues 8–32 and 177–192; these read QLQD…SDPS and SSLP…SSQS. The region spanning 322 to 371 is the bHLH domain; it reads VESRSSCPPFKVRKEKLGDRIAALQQLVSPFGKTDTASVLMEAIGYIKFL. The tract at residues 386–411 is disordered; sequence SRNRPGKASQLVSQSQEGDEEETRDL.

Homodimer.

The protein resides in the nucleus. This is Transcription factor bHLH110 (BHLH110) from Arabidopsis thaliana (Mouse-ear cress).